Consider the following 120-residue polypeptide: Ribonuclease P protein component (120 aa).

This sequence belongs to the RnpA family. Consists of a catalytic RNA component (M1 or rnpB) and a protein subunit.

It catalyses the reaction Endonucleolytic cleavage of RNA, removing 5'-extranucleotides from tRNA precursor.. Its function is as follows. RNaseP catalyzes the removal of the 5'-leader sequence from pre-tRNA to produce the mature 5'-terminus. It can also cleave other RNA substrates such as 4.5S RNA. The protein component plays an auxiliary but essential role in vivo by binding to the 5'-leader sequence and broadening the substrate specificity of the ribozyme. The protein is Ribonuclease P protein component of Dehalococcoides mccartyi (strain CBDB1).